Consider the following 2467-residue polypeptide: Transcription factor TFIIIB component B'' homolog (2467 aa).

2 disordered regions span residues 1–145 and 159–243; these read MFRR…RYRI and LRKE…VDDG. Residues 1-301 are interaction with ZBTB43; the sequence is MFRRARLSVK…TYSSFRKNYY (301 aa). The span at 81 to 92 shows a compositional bias: low complexity; that stretch reads AAESSTLSSASS. The span at 99 to 118 shows a compositional bias: polar residues; it reads SSTSSLVQPSGSAPSQSRPL. Basic and acidic residues-rich tracts occupy residues 133 to 144 and 177 to 186; these read AKEKQPCSDRYR and RPPDRSKMTM. Residues 144–177 adopt a coiled-coil conformation; that stretch reads RIYKARKLREMLKEELRKEKKQWKNKFSTNESQR. The segment covering 231–242 has biased composition (acidic residues); that stretch reads NDNEDVEEEVDD. Residues 297 to 347 form the Myb-like domain; the sequence is RKNYYSKPWSNKETDMFFLAISMVGTDFSMIGQLFPHRARIEIKNKFKREE. A required for phosphorylation by CSNK2A1 region spans residues 357–472; that stretch reads AFQEKRPFDF…QEKKRRRNQG (116 aa). 16 disordered regions span residues 380–513, 576–720, 748–844, 866–893, 971–1200, 1231–1270, 1318–1388, 1409–1448, 1527–1561, 1592–1706, 1902–1926, 1977–2014, 2058–2083, 2179–2206, 2260–2290, and 2304–2449; these read EEKR…ECNK, SADM…VKAA, PPQT…PATW, LTAT…NAEM, LQEN…SSKI, LGRH…VKPA, DSDQ…LVPI, LPVR…PELQ, KAKP…EDHL, IHSE…RASK, IVSK…LPTR, IQRE…QCVG, LDSG…SDVP, LVVQ…DLTS, GIFP…SGSL, and LPQS…EEVT. Residues 458–487 are a coiled coil; the sequence is EQDQNQEKKRRRNQGEANKQEATNLLERVL. Residues 649–660 are compositionally biased toward basic and acidic residues; that stretch reads AAEKNHMEKETM. The span at 809–824 shows a compositional bias: basic residues; sequence RFQKPKPNTGRRRRRI. Basic and acidic residues-rich tracts occupy residues 873–884, 992–1002, 1009–1041, 1089–1098, 1112–1130, and 1150–1170; these read KDSESDVKDSGR, TGKDLAMKEST, TEER…RGEM, EGKELNLRET, EKTD…ERES, and DLGK…EEHS. 4 stretches are compositionally biased toward polar residues: residues 1180–1200, 1251–1265, 1318–1330, and 1364–1382; these read LSSS…SSKI, DTNL…QQPL, DSDQ…QHNV, and PPNS…NQEN. Composition is skewed to basic and acidic residues over residues 1429 to 1448, 1536 to 1561, and 1592 to 1603; these read QIVE…PELQ, RRKD…EDHL, and IHSEESGSDRND. Composition is skewed to polar residues over residues 1621 to 1642 and 1650 to 1665; these read EQPT…SSCP and YPKT…SSAS. Residues 1688–1697 are compositionally biased toward basic residues; sequence RGSKRIRGKT. 3 stretches are compositionally biased toward basic and acidic residues: residues 1902-1913, 1977-1996, and 2068-2078; these read IVSKEQSNRDAA, IQRE…DKSH, and AAKEALKETPK. Low complexity predominate over residues 2185–2199; it reads PSLSPSRSGSSEKPP. 3 stretches are compositionally biased toward polar residues: residues 2262–2273, 2319–2334, and 2414–2429; these read FPTSESTHATSK, PASN…SSSK, and TAGS…SSDQ.

In terms of assembly, component of TFIIIB complex. The TFIIIB complex has two activities, alpha and beta. The TFIIIB-alpha and TFIIIB-beta activities are required for transcription of genes with TFIIIC-bound internal promoters and PSE transcription factor-bound external promoters, respectively. The TFIIIB-alpha activity complex is composed of TBP, BDP1, and a complex containing both BRF2 and at least four stably associated proteins; YY1 facilitates the formation of TFIIIB-alpha activity complex. The TFIIIB-beta activity complex is composed of TBP, BDP1, and BRF1. Interacts with BRF1; this interaction diminishes during mitosis resulting in the release of BDP1 from chromosomal templates. Component of TFIIIC complex. The TFIIIC complex has two activities, C1 and C2. The TFIIIC2 activity complex is only required for transcription of the 'classical' pol III genes whereas the TFIIIC1 activity complex is required for transcription of all pol III genes. The TFIIIC1 activity complex is composed at least of BDP1. Interacts with ZBTB43. In terms of processing, phosphorylated by CSNK2A1 during mitosis, resulting in its release from chromatin and suppression of polymerase III transcription. Expressed in the cochlea, particularly in the spiral ligament, the capillaries of the stria vascularis and the basilar membrane.

The protein localises to the nucleus. Its function is as follows. General activator of RNA polymerase III transcription. Requires for transcription from all three types of polymerase III promoters. Requires for transcription of genes with internal promoter elements and with promoter elements upstream of the initiation site. The polypeptide is Transcription factor TFIIIB component B'' homolog (Bdp1) (Mus musculus (Mouse)).